Consider the following 174-residue polypeptide: Flavodoxin (174 aa).

Residues 4–166 form the Flavodoxin-like domain; that stretch reads IGIFFGSDTG…RIIQWTKKIK (163 aa).

This sequence belongs to the flavodoxin family. The cofactor is FMN.

Functionally, low-potential electron donor to a number of redox enzymes. This chain is Flavodoxin (fldA), found in Buchnera aphidicola subsp. Baizongia pistaciae (strain Bp).